A 207-amino-acid chain; its full sequence is Ras-related protein Rab-7a (207 aa).

Residue Thr2 is modified to N-acetylthreonine. 11 residues coordinate GTP: Ser17, Gly18, Val19, Gly20, Lys21, Thr22, Ser23, Ser34, Asn35, Tyr37, and Thr40. Residue Thr22 participates in Mg(2+) binding. The short motif at 28 to 41 (YVNKKFSNQYKATI) is the Switch 1 element. 2 residues coordinate Mg(2+): Thr40 and Asp63. Gly66 contacts GTP. A Switch 2 motif is present at residues 67–82 (QERFQSLGVAFYRGAD). Residue Ser72 is modified to Phosphoserine. GTP-binding residues include Asn125, Lys126, Asp128, Ala156, and Lys157. Glycyl lysine isopeptide (Lys-Gly) (interchain with G-Cter in ubiquitin) cross-links involve residues Lys191 and Lys194. S-geranylgeranyl cysteine attachment occurs at residues Cys205 and Cys207. Cys207 bears the Cysteine methyl ester mark.

The protein belongs to the small GTPase superfamily. Rab family. In terms of assembly, interacts with NTRK1/TRKA. Interacts with RILP. Interacts with PSMA7. Interacts with RNF115. Interacts with FYCO1. Interacts with the PIK3C3/VPS34-PIK3R4 complex. The GTP-bound form interacts with OSBPL1A. The GTP-bound form interacts with RAC1. Interacts with CLN3. Interacts with CHM, the substrate-binding subunit of the Rab geranylgeranyltransferase complex. Interacts with C9orf72. Does not interact with HPS4 and the BLOC-3 complex (heterodimer of HPS1 and HPS4). Interacts with CLN5. Interacts with PLEKHM1 (via N- and C-terminus). Interacts with PRPH; the interaction is direct. Interacts with VPS13A. The GDP-bound form interacts with RIMOC1. Interacts with the MON1A-CCZ1B complex and this interaction is enhanced in the presence of RIMOC1. Interacts with VPS39 and VPS41. Forms a ternary complex with LAMP2 and RUFY4; the interaction with LAMP2 is mediated by RUFY4 (via RUN and coiled coil domains). It depends on Mg(2+) as a cofactor. In terms of processing, deubiquitination at Lys-191 and Lys-194 by USP32. Post-translationally, phosphorylated at Ser-72 by LRRK1; phosphorylation is dependent on protein kinase C (PKC) activation of LRRK1. Prenylated. Prenylation is required for association with cellular membranes.

The protein localises to the cytoplasmic vesicle. It localises to the phagosome membrane. It is found in the late endosome membrane. Its subcellular location is the lysosome membrane. The protein resides in the melanosome membrane. The protein localises to the autophagosome membrane. It localises to the lipid droplet. It is found in the endosome membrane. Its subcellular location is the mitochondrion membrane. The enzyme catalyses GTP + H2O = GDP + phosphate + H(+). With respect to regulation, regulated by guanine nucleotide exchange factors (GEFs) which promote the exchange of bound GDP for free GTP. Regulated by GTPase activating proteins (GAPs) which increase the GTP hydrolysis activity. Inhibited by GDP dissociation inhibitors (GDIs). Its function is as follows. The small GTPases Rab are key regulators of intracellular membrane trafficking, from the formation of transport vesicles to their fusion with membranes. Rabs cycle between an inactive GDP-bound form and an active GTP-bound form that is able to recruit to membranes different sets of downstream effectors directly responsible for vesicle formation, movement, tethering and fusion. In its active state, RAB7A binds to a variety of effector proteins playing a key role in the regulation of endo-lysosomal trafficking. Governs early-to-late endosomal maturation, microtubule minus-end as well as plus-end directed endosomal migration and positioning, and endosome-lysosome transport through different protein-protein interaction cascades. Also plays a central role in growth-factor-mediated cell signaling, nutrient-transporter-mediated nutrient uptake, neurotrophin transport in the axons of neurons and lipid metabolism. Also involved in regulation of some specialized endosomal membrane trafficking, such as maturation of melanosomes, pathogen-induced phagosomes (or vacuoles) and autophagosomes. Plays a role in the maturation and acidification of phagosomes that engulf pathogens, such as S.aureus and Mycobacteria. Plays a role in the fusion of phagosomes with lysosomes. In concert with RAC1, plays a role in regulating the formation of RBs (ruffled borders) in osteoclasts. Controls the endosomal trafficking and neurite outgrowth signaling of NTRK1/TRKA. Regulates the endocytic trafficking of the EGF-EGFR complex by regulating its lysosomal degradation. Involved in the ADRB2-stimulated lipolysis through lipophagy, a cytosolic lipase-independent autophagic pathway. Required for the exosomal release of SDCBP, CD63 and syndecan. Required for vesicular trafficking and cell surface expression of ACE2. May play a role in PRPH neuronal intermediate filament assembly. This Canis lupus familiaris (Dog) protein is Ras-related protein Rab-7a (RAB7A).